The primary structure comprises 299 residues: Pentalenolactone F synthase (299 aa).

The Fe cation site is built by histidine 105 and aspartate 107. Threonine 133 and tryptophan 251 together coordinate 2-oxoglutarate. Residue histidine 266 coordinates Fe cation. Arginine 277 provides a ligand contact to 2-oxoglutarate.

This sequence belongs to the TfdA dioxygenase family. Fe(2+) serves as cofactor.

It catalyses the reaction pentalenolactone D + 2 2-oxoglutarate + 2 O2 = pentalenolactone F + 2 succinate + 2 CO2 + H2O. Its pathway is antibiotic biosynthesis; pentalenolactone biosynthesis. With respect to regulation, activated by ascorbate. Functionally, catalyzes the Fe(2+) and alpha-ketoglutarate-dependent oxidation of pentalenolactone D to pentalenolactone F in the biosynthesis of pentalenolactone antibiotic. Also able to catalyze the oxidation of pentalenolactone D to pentalenolactone E. This is Pentalenolactone F synthase (pntD) from Streptomyces arenae.